We begin with the raw amino-acid sequence, 208 residues long: Large ribosomal subunit protein bL25 (208 aa).

The protein belongs to the bacterial ribosomal protein bL25 family. CTC subfamily. Part of the 50S ribosomal subunit; part of the 5S rRNA/L5/L18/L25 subcomplex. Contacts the 5S rRNA. Binds to the 5S rRNA independently of L5 and L18.

In terms of biological role, this is one of the proteins that binds to the 5S RNA in the ribosome where it forms part of the central protuberance. This is Large ribosomal subunit protein bL25 from Bordetella pertussis (strain Tohama I / ATCC BAA-589 / NCTC 13251).